A 409-amino-acid polypeptide reads, in one-letter code: Ubiquitin-associated domain-containing protein 1 (409 aa).

The residue at position 1 (Met-1) is an N-acetylmethionine. Residues 14–98 enclose the Ubiquitin-like domain; sequence LRLHICAADG…LLLIKKRVPS (85 aa). The interval 101 to 122 is disordered; sequence PKMADVSAEEKKKQEQKAPDKD. Basic and acidic residues predominate over residues 108–122; that stretch reads AEEKKKQEQKAPDKD. One can recognise a UBA 1 domain in the interval 187 to 231; the sequence is DEDERVDETALRQLTEMGFPESRASKALRLNHMSVPQAMEWLIEH. The tract at residues 239–273 is disordered; sequence TPLPGHAAQAGASAAATTSSTSSEAAVGTSVEDEE. The span at 245–268 shows a compositional bias: low complexity; the sequence is AAQAGASAAATTSSTSSEAAVGTS. The region spanning 292 to 332 is the UBA 2 domain; it reads RADARAVISLMEMGFDEKEVIDALRVNNNQQNAACEWLLGD. The STI1 domain occupies 357 to 396; sequence NPVVQLGLTNPKTLLAFEDMLENPLNSTQWMNDPETGPVM.

Component of the KPC complex composed of RNF123/KPC1 and UBAC1/KPC2. Interacts (via ubiquitin-like domain) with RNF123. Interacts (via ubiquitin-like and UBA domains) with the proteasome via its N-terminal domain.

It is found in the cytoplasm. Its pathway is protein modification; protein ubiquitination. In terms of biological role, non-catalytic component of the KPC complex, a E3 ubiquitin-protein ligase complex that mediates polyubiquitination of target proteins, such as CDKN1B and NFKB1. The KPC complex catalyzes polyubiquitination and proteasome-mediated degradation of CDKN1B during G1 phase of the cell cycle. The KPC complex also acts as a key regulator of the NF-kappa-B signaling by promoting maturation of the NFKB1 component of NF-kappa-B by catalyzing ubiquitination of the NFKB1 p105 precursor. Within the KPC complex, UBAC1 acts as an adapter that promotes the transfer of target proteins that have been polyubiquitinated by RNF123/KPC1 to the 26S proteasome. The chain is Ubiquitin-associated domain-containing protein 1 (Ubac1) from Mus musculus (Mouse).